The following is a 70-amino-acid chain: U-actitoxin-Ael2c (70 aa).

Residues 1–21 (SYQRFLFLVVVASLIATSLAI) form the signal peptide. The propeptide occupies 22–26 (PKDLE). 3 cysteine pairs are disulfide-bonded: Cys-32–Cys-65, Cys-34–Cys-58, and Cys-48–Cys-66.

Belongs to the sea anemone type 3 (BDS) potassium channel toxin family.

It localises to the secreted. It is found in the nematocyst. Functionally, potently and selectively inhibits voltage-gated potassium channels Kv11/KCNH/ERG. Acts as a gating-modifier toxin that shifts the voltage-dependence of ERG activation in the positive direction and suppresses its current amplitudes elicited by strong depolarizing pulses that maximally activate the channels. The sequence is that of U-actitoxin-Ael2c from Anthopleura elegantissima (Green aggregating anemone).